The primary structure comprises 149 residues: Lipoprotein signal peptidase (149 aa).

Transmembrane regions (helical) follow at residues 24-44, 57-77, and 81-101; these read SHIALGASTSIVTGLLSLTNL, KMWFFYLISVIALIVMGYLLW, and GKWLYEVGISLMIAGTLGNFI. Active-site residues include Asp111 and Asp127. The helical transmembrane segment at 122-142 threads the bilayer; it reads IFNFADSCLTVGVIFILIGVL.

This sequence belongs to the peptidase A8 family.

It localises to the cell membrane. It catalyses the reaction Release of signal peptides from bacterial membrane prolipoproteins. Hydrolyzes -Xaa-Yaa-Zaa-|-(S,diacylglyceryl)Cys-, in which Xaa is hydrophobic (preferably Leu), and Yaa (Ala or Ser) and Zaa (Gly or Ala) have small, neutral side chains.. Its pathway is protein modification; lipoprotein biosynthesis (signal peptide cleavage). In terms of biological role, this protein specifically catalyzes the removal of signal peptides from prolipoproteins. This chain is Lipoprotein signal peptidase, found in Lactiplantibacillus plantarum (strain ATCC BAA-793 / NCIMB 8826 / WCFS1) (Lactobacillus plantarum).